A 111-amino-acid polypeptide reads, in one-letter code: MTDIDPHIWGPSFWSTYHLYASSYPIHPTPIIMDAARSFVKTIPFTLPCSSCTDHAFAYIKNIQKQDPDLISIVSSKMLFEKFFIDFHNSVNYRLGKPLLPESVARKKWRF.

In terms of domain architecture, ERV/ALR sulfhydryl oxidase spans 2–109 (TDIDPHIWGP…LPESVARKKW (108 aa)). An intrachain disulfide couples Cys-49 to Cys-52.

This sequence belongs to the IIV-6 347L family. FAD is required as a cofactor.

The enzyme catalyses 2 R'C(R)SH + O2 = R'C(R)S-S(R)CR' + H2O2. FAD-dependent sulfhydryl oxidase that catalyzes disulfide bond formation. The protein is Putative FAD-linked sulfhydryl oxidase 347L of Invertebrate iridescent virus 6 (IIV-6).